A 228-amino-acid chain; its full sequence is 7-cyano-7-deazaguanine synthase (228 aa).

Position 9–19 (9–19 (LSGGPDSTTVL)) interacts with ATP. Zn(2+) contacts are provided by C193, C203, C206, and C209.

Belongs to the QueC family. Zn(2+) serves as cofactor.

It catalyses the reaction 7-carboxy-7-deazaguanine + NH4(+) + ATP = 7-cyano-7-deazaguanine + ADP + phosphate + H2O + H(+). The protein operates within purine metabolism; 7-cyano-7-deazaguanine biosynthesis. Its function is as follows. Catalyzes the ATP-dependent conversion of 7-carboxy-7-deazaguanine (CDG) to 7-cyano-7-deazaguanine (preQ(0)). The polypeptide is 7-cyano-7-deazaguanine synthase (Rickettsia conorii (strain ATCC VR-613 / Malish 7)).